Consider the following 326-residue polypeptide: GTP 3',8-cyclase (326 aa).

Positions 5–227 (GHGRTVDYLR…ALGREGASPS (223 aa)) constitute a Radical SAM core domain. R14 is a binding site for GTP. Residues C21 and C25 each coordinate [4Fe-4S] cluster. Y27 is a binding site for S-adenosyl-L-methionine. [4Fe-4S] cluster is bound at residue C28. R64 lines the GTP pocket. G68 is a binding site for S-adenosyl-L-methionine. Position 95 (T95) interacts with GTP. S119 provides a ligand contact to S-adenosyl-L-methionine. K155 is a binding site for GTP. Residue M189 coordinates S-adenosyl-L-methionine. Positions 250 and 253 each coordinate [4Fe-4S] cluster. 255–257 (RIR) is a GTP binding site. C267 contacts [4Fe-4S] cluster.

This sequence belongs to the radical SAM superfamily. MoaA family. In terms of assembly, monomer and homodimer. It depends on [4Fe-4S] cluster as a cofactor.

The enzyme catalyses GTP + AH2 + S-adenosyl-L-methionine = (8S)-3',8-cyclo-7,8-dihydroguanosine 5'-triphosphate + 5'-deoxyadenosine + L-methionine + A + H(+). Its pathway is cofactor biosynthesis; molybdopterin biosynthesis. Functionally, catalyzes the cyclization of GTP to (8S)-3',8-cyclo-7,8-dihydroguanosine 5'-triphosphate. The polypeptide is GTP 3',8-cyclase (Sulfurovum sp. (strain NBC37-1)).